Reading from the N-terminus, the 268-residue chain is Homeobox protein Hox-C4a (268 aa).

The segment at 70 to 129 is disordered; it reads PEPDTQRGHGLPHAGHLLGKGQSASCEPPPLPLSPATPSAASSACNQATPEHPNSSASAK. 2 stretches are compositionally biased toward low complexity: residues 77 to 95 and 105 to 114; these read GHGL…SASC and ATPSAASSAC. The segment covering 115 to 128 has biased composition (polar residues); that stretch reads NQATPEHPNSSASA. Positions 133-138 match the Antp-type hexapeptide motif; the sequence is VYPWMK. Positions 154–213 form a DNA-binding region, homeobox; it reads PKRSRTAYTRQQVLELEKEFHYNRYLTRRRRIEIAHSLVLSERQIKIWFQNRRMKWKKDH. The disordered stretch occupies residues 212–268; the sequence is DHRLPNTKVRSSSSTGISSGSNTSSAAGVVAAASTTNTMSASEDLSGTERGEDITRL. Over residues 222–253 the composition is skewed to low complexity; it reads SSSSTGISSGSNTSSAAGVVAAASTTNTMSAS. The span at 258–268 shows a compositional bias: basic and acidic residues; it reads GTERGEDITRL.

The protein belongs to the Antp homeobox family. Deformed subfamily.

Its subcellular location is the nucleus. In terms of biological role, sequence-specific transcription factor which is part of a developmental regulatory system that provides cells with specific positional identities on the anterior-posterior axis. This is Homeobox protein Hox-C4a (hoxc4a) from Danio rerio (Zebrafish).